Consider the following 221-residue polypeptide: Deoxyribose-phosphate aldolase (221 aa).

Aspartate 90 functions as the Proton donor/acceptor in the catalytic mechanism. Lysine 152 functions as the Schiff-base intermediate with acetaldehyde in the catalytic mechanism. Lysine 181 (proton donor/acceptor) is an active-site residue.

The protein belongs to the DeoC/FbaB aldolase family. DeoC type 1 subfamily.

The protein resides in the cytoplasm. The enzyme catalyses 2-deoxy-D-ribose 5-phosphate = D-glyceraldehyde 3-phosphate + acetaldehyde. The protein operates within carbohydrate degradation; 2-deoxy-D-ribose 1-phosphate degradation; D-glyceraldehyde 3-phosphate and acetaldehyde from 2-deoxy-alpha-D-ribose 1-phosphate: step 2/2. Functionally, catalyzes a reversible aldol reaction between acetaldehyde and D-glyceraldehyde 3-phosphate to generate 2-deoxy-D-ribose 5-phosphate. The polypeptide is Deoxyribose-phosphate aldolase (Exiguobacterium sibiricum (strain DSM 17290 / CCUG 55495 / CIP 109462 / JCM 13490 / 255-15)).